We begin with the raw amino-acid sequence, 258 residues long: 5'-nucleotidase SurE (258 aa).

A divalent metal cation contacts are provided by D8, D9, S40, and N98.

This sequence belongs to the SurE nucleotidase family. A divalent metal cation is required as a cofactor.

The protein resides in the cytoplasm. The catalysed reaction is a ribonucleoside 5'-phosphate + H2O = a ribonucleoside + phosphate. Nucleotidase that shows phosphatase activity on nucleoside 5'-monophosphates. The protein is 5'-nucleotidase SurE of Synechococcus elongatus (strain ATCC 33912 / PCC 7942 / FACHB-805) (Anacystis nidulans R2).